A 152-amino-acid polypeptide reads, in one-letter code: MMKHIDLKILDNRIGREFPLPTYATTGSAGLDLRALIDSAITVEAGQTVLIPTGISVYIADPNLAAVILPRSGLGHKNGIVLGNLVGLIDSDYQGPLMVSIWNRSDKPFTIEVGDRIAQLVFVPVVQASFNIVTDFEQTSRGEGGFGHSGKQ.

Substrate contacts are provided by residues 71–73, asparagine 84, 88–90, and methionine 98; these read RSG and LID.

The protein belongs to the dUTPase family. It depends on Mg(2+) as a cofactor.

It catalyses the reaction dUTP + H2O = dUMP + diphosphate + H(+). It participates in pyrimidine metabolism; dUMP biosynthesis; dUMP from dCTP (dUTP route): step 2/2. In terms of biological role, this enzyme is involved in nucleotide metabolism: it produces dUMP, the immediate precursor of thymidine nucleotides and it decreases the intracellular concentration of dUTP so that uracil cannot be incorporated into DNA. In Haemophilus ducreyi (strain 35000HP / ATCC 700724), this protein is Deoxyuridine 5'-triphosphate nucleotidohydrolase.